We begin with the raw amino-acid sequence, 201 residues long: B-cell CLL/lymphoma 7 protein family member A (201 aa).

The interval 46–201 (YKWVPVTEPK…GKIDSSSEES (156 aa)) is disordered. Over residues 54–71 (PKSDDNKNKKKGKDDKYG) the composition is skewed to basic and acidic residues. Composition is skewed to polar residues over residues 73–83 (EVTTPENSSSP), 93–114 (SNQSSIADSSPLKQETSNNTSP), and 133–142 (QYPSKQPSSG). Residues 158–167 (TSKRDSKSQG) are compositionally biased toward basic and acidic residues. The span at 168 to 179 (DSESFLDSSKSA) shows a compositional bias: polar residues. Positions 192 to 201 (GKIDSSSEES) are enriched in basic and acidic residues.

It belongs to the BCL7 family.

The sequence is that of B-cell CLL/lymphoma 7 protein family member A (bcl7a) from Danio rerio (Zebrafish).